Consider the following 506-residue polypeptide: Acetaldehyde dehydrogenase (506 aa).

Residues glutamate 262 and cysteine 301 contribute to the active site.

Belongs to the aldehyde dehydrogenase family.

It catalyses the reaction acetaldehyde + NAD(+) + H2O = acetate + NADH + 2 H(+). It participates in alcohol metabolism; ethanol degradation; acetate from ethanol: step 2/2. Catalyzes the NAD(+)-dependent oxidation of acetaldehyde to acetate. Is likely a component of the ethanol oxidation system that allows P.aeruginosa to grow on ethanol as the sole carbon and energy source. This chain is Acetaldehyde dehydrogenase, found in Pseudomonas aeruginosa.